The chain runs to 345 residues: Anthranilate phosphoribosyltransferase (345 aa).

Residues glycine 79, 82 to 83 (GD), threonine 87, 89 to 92 (NVST), 106 to 114 (KHGNRAVSG), and serine 118 each bind 5-phospho-alpha-D-ribose 1-diphosphate. An anthranilate-binding site is contributed by glycine 79. A Mg(2+)-binding site is contributed by serine 91. An anthranilate-binding site is contributed by asparagine 109. Arginine 164 lines the anthranilate pocket. Aspartate 223 and glutamate 224 together coordinate Mg(2+).

It belongs to the anthranilate phosphoribosyltransferase family. In terms of assembly, homodimer. Mg(2+) serves as cofactor.

It carries out the reaction N-(5-phospho-beta-D-ribosyl)anthranilate + diphosphate = 5-phospho-alpha-D-ribose 1-diphosphate + anthranilate. It participates in amino-acid biosynthesis; L-tryptophan biosynthesis; L-tryptophan from chorismate: step 2/5. In terms of biological role, catalyzes the transfer of the phosphoribosyl group of 5-phosphorylribose-1-pyrophosphate (PRPP) to anthranilate to yield N-(5'-phosphoribosyl)-anthranilate (PRA). The chain is Anthranilate phosphoribosyltransferase from Saccharolobus islandicus (strain M.14.25 / Kamchatka #1) (Sulfolobus islandicus).